Reading from the N-terminus, the 337-residue chain is Glyceraldehyde-3-phosphate dehydrogenase 2 (337 aa).

NADP(+)-binding positions include 11 to 12 (RI), D35, R80, and T122. D-glyceraldehyde 3-phosphate is bound by residues 153 to 155 (SCT), T184, R199, 212 to 213 (TG), and R235. Catalysis depends on C154, which acts as the Nucleophile. N317 is a binding site for NADP(+).

In terms of assembly, homotetramer.

The protein localises to the cytoplasm. It carries out the reaction D-glyceraldehyde 3-phosphate + phosphate + NADP(+) = (2R)-3-phospho-glyceroyl phosphate + NADPH + H(+). It catalyses the reaction D-glyceraldehyde 3-phosphate + phosphate + NAD(+) = (2R)-3-phospho-glyceroyl phosphate + NADH + H(+). It participates in carbohydrate biosynthesis; Calvin cycle. Its function is as follows. Gap2 has a major role in carbon fixation as a component of the Calvin cycle. Catalyzes the oxidative phosphorylation of glyceraldehyde 3-phosphate (G3P) to 1,3-bisphosphoglycerate (BPG) using the cofactor NADP. The first reaction step involves the formation of a hemiacetal intermediate between G3P and a cysteine residue, and this hemiacetal intermediate is then oxidized to a thioester, with concomitant reduction of NADP to NADPH. The reduced NADPH is then exchanged with the second NAD, and the thioester is attacked by a nucleophilic inorganic phosphate to produce BPG. This chain is Glyceraldehyde-3-phosphate dehydrogenase 2 (gap2), found in Nostoc sp. (strain PCC 7120 / SAG 25.82 / UTEX 2576).